Here is a 453-residue protein sequence, read N- to C-terminus: Fibrinogen gamma chain (453 aa).

A signal peptide spans 1-26 (MSWSLHPRNLILYFYALLFLSSTCVA). The residue at position 68 (serine 68) is a Phosphoserine; by FAM20C. The N-linked (GlcNAc...) (complex) asparagine glycan is linked to asparagine 78. The Fibrinogen C-terminal domain maps to 170–416 (QIHDITGKDC…KTTMKIIPFN (247 aa)). Cysteine 179 and cysteine 208 are joined by a disulfide. The N-linked (GlcNAc...) asparagine; in variant Asahi glycan is linked to asparagine 334. Residues aspartate 344, aspartate 346, phenylalanine 348, and glycine 350 each coordinate Ca(2+). Cysteine 352 and cysteine 365 form a disulfide bridge. The segment at 400-422 (TRWYSMKKTTMKIIPFNRLTIGE) is gamma-chain polymerization, binding amino end of another fibrin alpha chain. Residues 423-437 (GQQHHLGGAKQVRPE) form a platelet aggregation and Staphylococcus clumping region. Residue glutamine 424 forms an Isoglutamyl lysine isopeptide (Gln-Lys) (interchain with K-432) linkage. The disordered stretch occupies residues 424–453 (QQHHLGGAKQVRPEHPAETEYDSLYPEDDL). Lysine 432 participates in a covalent cross-link: Isoglutamyl lysine isopeptide (Lys-Gln) (interchain with Q-424). The span at 442-453 (TEYDSLYPEDDL) shows a compositional bias: acidic residues. A sulfotyrosine mark is found at tyrosine 444 and tyrosine 448.

As to quaternary structure, heterohexamer; disulfide linked. Contains 2 sets of 3 non-identical chains (alpha, beta and gamma). The 2 heterotrimers are in head to head conformation with the N-termini in a small central domain. Conversion of fibrinogen to fibrin is triggered by thrombin, which cleaves fibrinopeptides A and B from alpha and beta chains, and thus exposes the N-terminal polymerization sites responsible for the formation of the soft clot. The soft clot is converted into the hard clot by factor XIIIA which catalyzes the epsilon-(gamma-glutamyl)lysine cross-linking between gamma chains (stronger) and between alpha chains (weaker) of different monomers. In terms of processing, sulfation of C-terminal tyrosines increases affinity for thrombin. As to expression, detected in blood plasma (at protein level).

The protein resides in the secreted. In terms of biological role, together with fibrinogen alpha (FGA) and fibrinogen beta (FGB), polymerizes to form an insoluble fibrin matrix. Has a major function in hemostasis as one of the primary components of blood clots. In addition, functions during the early stages of wound repair to stabilize the lesion and guide cell migration during re-epithelialization. Was originally thought to be essential for platelet aggregation, based on in vitro studies using anticoagulated blood. However, subsequent studies have shown that it is not absolutely required for thrombus formation in vivo. Enhances expression of SELP in activated platelets via an ITGB3-dependent pathway. Maternal fibrinogen is essential for successful pregnancy. Fibrin deposition is also associated with infection, where it protects against IFNG-mediated hemorrhage. May also facilitate the antibacterial immune response via both innate and T-cell mediated pathways. The chain is Fibrinogen gamma chain (FGG) from Homo sapiens (Human).